A 149-amino-acid polypeptide reads, in one-letter code: Transcriptional repressor NrdR (149 aa).

A zinc finger lies at 3-34 (CPFCFAVDTKVIDSRLVGEGSSVRRRRQCLVC). Positions 49–139 (PRVVKSNDVR…VYRSFEDIKE (91 aa)) constitute an ATP-cone domain.

It belongs to the NrdR family. Zn(2+) is required as a cofactor.

Negatively regulates transcription of bacterial ribonucleotide reductase nrd genes and operons by binding to NrdR-boxes. This is Transcriptional repressor NrdR from Escherichia coli O139:H28 (strain E24377A / ETEC).